A 416-amino-acid polypeptide reads, in one-letter code: Gamma-glutamyl phosphate reductase (416 aa).

This sequence belongs to the gamma-glutamyl phosphate reductase family.

The protein resides in the cytoplasm. The catalysed reaction is L-glutamate 5-semialdehyde + phosphate + NADP(+) = L-glutamyl 5-phosphate + NADPH + H(+). It participates in amino-acid biosynthesis; L-proline biosynthesis; L-glutamate 5-semialdehyde from L-glutamate: step 2/2. Catalyzes the NADPH-dependent reduction of L-glutamate 5-phosphate into L-glutamate 5-semialdehyde and phosphate. The product spontaneously undergoes cyclization to form 1-pyrroline-5-carboxylate. In Salmonella paratyphi C (strain RKS4594), this protein is Gamma-glutamyl phosphate reductase.